A 194-amino-acid polypeptide reads, in one-letter code: dCTP deaminase (194 aa).

Residues 110 to 115 (RSSLAR), Asp128, 136 to 138 (VLE), Tyr171, Lys178, and Gln182 each bind dCTP. Glu138 serves as the catalytic Proton donor/acceptor.

The protein belongs to the dCTP deaminase family. In terms of assembly, homotrimer.

It catalyses the reaction dCTP + H2O + H(+) = dUTP + NH4(+). It functions in the pathway pyrimidine metabolism; dUMP biosynthesis; dUMP from dCTP (dUTP route): step 1/2. Functionally, catalyzes the deamination of dCTP to dUTP. This Histophilus somni (strain 2336) (Haemophilus somnus) protein is dCTP deaminase.